Here is a 614-residue protein sequence, read N- to C-terminus: Probable LRR receptor-like serine/threonine-protein kinase At5g45780 (614 aa).

The signal sequence occupies residues 1 to 26; sequence MEISLMKFLFLGIWVYYYSVLDSVSA. Topologically, residues 27-242 are extracellular; it reads MDSLLSPKGV…NSKHHSLVLS (216 aa). LRR repeat units follow at residues 104–126, 128–151, 152–174, and 176–197; these read HLHTLLLQNNQLTGPIPSELGQL, ELETLDLSGNRFSGEIPASLGFLT, HLNYLRLSRNLLSGQVPHLVAGL, and GLSFLDLSFNNLSGPTPNISAK. N-linked (GlcNAc...) asparagine glycosylation is found at asparagine 186, asparagine 193, and asparagine 224. A helical membrane pass occupies residues 243 to 263; it reads FAFGIVVAFIISLMFLFFWVL. At 264 to 614 the chain is on the cytoplasmic side; sequence WHRSRLSRSH…IEAIELSGPR (351 aa). Position 297 is a phosphothreonine (threonine 297). The region spanning 300-576 is the Protein kinase domain; the sequence is FSPKNILGQG…QVLKVLEGLV (277 aa). An ATP-binding site is contributed by 306-314; the sequence is LGQGGFGMV. Residue threonine 323 is modified to Phosphothreonine. Lysine 328 contacts ATP. Serine 380 carries the post-translational modification Phosphoserine. Aspartate 426 (proton acceptor) is an active-site residue. 3 positions are modified to phosphothreonine: threonine 459, threonine 460, and threonine 465. Position 473 is a phosphotyrosine (tyrosine 473). Residue serine 475 is modified to Phosphoserine. Position 476 is a phosphothreonine (threonine 476). Residue serine 480 is modified to Phosphoserine. Threonine 555 is modified (phosphothreonine).

This sequence belongs to the protein kinase superfamily. Ser/Thr protein kinase family.

The protein localises to the membrane. It catalyses the reaction L-seryl-[protein] + ATP = O-phospho-L-seryl-[protein] + ADP + H(+). The catalysed reaction is L-threonyl-[protein] + ATP = O-phospho-L-threonyl-[protein] + ADP + H(+). This is Probable LRR receptor-like serine/threonine-protein kinase At5g45780 from Arabidopsis thaliana (Mouse-ear cress).